We begin with the raw amino-acid sequence, 398 residues long: Elongation factor Tu (398 aa).

The region spanning 10–207 (KPHVNIGTIG…TVDSYIPEPE (198 aa)) is the tr-type G domain. Residues 19 to 26 (GHVDHGKT) form a G1 region. Position 19-26 (19-26 (GHVDHGKT)) interacts with GTP. Residue threonine 26 participates in Mg(2+) binding. The tract at residues 63-67 (GITIN) is G2. The G3 stretch occupies residues 84-87 (DAPG). GTP-binding positions include 84–88 (DAPGH) and 139–142 (NKVD). The tract at residues 139–142 (NKVD) is G4. The segment at 177–179 (SAL) is G5.

The protein belongs to the TRAFAC class translation factor GTPase superfamily. Classic translation factor GTPase family. EF-Tu/EF-1A subfamily. In terms of assembly, monomer.

The protein resides in the cytoplasm. The catalysed reaction is GTP + H2O = GDP + phosphate + H(+). In terms of biological role, GTP hydrolase that promotes the GTP-dependent binding of aminoacyl-tRNA to the A-site of ribosomes during protein biosynthesis. The sequence is that of Elongation factor Tu from Streptococcus pyogenes serotype M28 (strain MGAS6180).